A 258-amino-acid chain; its full sequence is Ditrans,polycis-undecaprenyl-diphosphate synthase ((2E,6E)-farnesyl-diphosphate specific) (258 aa).

D24 is a catalytic residue. Mg(2+) is bound at residue D24. Residues 25–28, W29, R37, H41, and 69–71 contribute to the substrate site; these read GNGR and SSE. The active-site Proton acceptor is N72. Residues W73, R75, R192, and 198–200 contribute to the substrate site; that span reads RIS. E211 serves as a coordination point for Mg(2+).

The protein belongs to the UPP synthase family. As to quaternary structure, homodimer. The cofactor is Mg(2+).

The enzyme catalyses 8 isopentenyl diphosphate + (2E,6E)-farnesyl diphosphate = di-trans,octa-cis-undecaprenyl diphosphate + 8 diphosphate. Functionally, catalyzes the sequential condensation of isopentenyl diphosphate (IPP) with (2E,6E)-farnesyl diphosphate (E,E-FPP) to yield (2Z,6Z,10Z,14Z,18Z,22Z,26Z,30Z,34E,38E)-undecaprenyl diphosphate (di-trans,octa-cis-UPP). UPP is the precursor of glycosyl carrier lipid in the biosynthesis of bacterial cell wall polysaccharide components such as peptidoglycan and lipopolysaccharide. The sequence is that of Ditrans,polycis-undecaprenyl-diphosphate synthase ((2E,6E)-farnesyl-diphosphate specific) from Xanthomonas oryzae pv. oryzae (strain KACC10331 / KXO85).